Consider the following 105-residue polypeptide: Thioredoxin (105 aa).

The region spanning 1–105 (ATMTLTDANF…LEAQLADVLQ (105 aa)) is the Thioredoxin domain. The cysteines at positions 29 and 32 are disulfide-linked.

Functionally, participates in various redox reactions through the reversible oxidation of its active center dithiol to a disulfide and catalyzes dithiol-disulfide exchange reactions. In Alicyclobacillus acidocaldarius subsp. acidocaldarius (Bacillus acidocaldarius), this protein is Thioredoxin (trxA).